Consider the following 53-residue polypeptide: Sec-independent protein translocase protein TatA (53 aa).

A helical transmembrane segment spans residues methionine 1–alanine 21.

It belongs to the TatA/E family. The Tat system comprises two distinct complexes: a TatABC complex, containing multiple copies of TatA, TatB and TatC subunits, and a separate TatA complex, containing only TatA subunits. Substrates initially bind to the TatABC complex, which probably triggers association of the separate TatA complex to form the active translocon.

The protein resides in the cell inner membrane. In terms of biological role, part of the twin-arginine translocation (Tat) system that transports large folded proteins containing a characteristic twin-arginine motif in their signal peptide across membranes. TatA could form the protein-conducting channel of the Tat system. In Rickettsia rickettsii (strain Iowa), this protein is Sec-independent protein translocase protein TatA.